The chain runs to 798 residues: Serine/threonine-protein kinase haspin (798 aa).

Residues 1–110 (MAASLPGPGS…WKLRARPSLT (110 aa)) are disordered. The residue at position 58 (S58) is a Phosphoserine. Residues 59–70 (QSDDPDDPDDPD) are compositionally biased toward acidic residues. At S93 the chain carries Phosphoserine; by AURKB. T97 carries the post-translational modification Phosphothreonine. Residue S143 is modified to Phosphoserine; by AURKB. S147 bears the Phosphoserine mark. Positions 275-350 (LVVGNGPEGP…KHQEATETSL (76 aa)) are disordered. Residues 300–315 (CQERGLQEAVRREHQE) are compositionally biased toward basic and acidic residues. In terms of domain architecture, Protein kinase spans 484 to 798 (LQRCEKIGEG…DLLCQHSLFK (315 aa)). Residues 490-498 (IGEGVFGEV), K511, 606-611 (EFGGID), 649-654 (DLHWGN), and 687-689 (DYT) contribute to the ATP site. D649 serves as the catalytic Proton acceptor.

This sequence belongs to the protein kinase superfamily. Ser/Thr protein kinase family. Haspin subfamily. Mg(2+) is required as a cofactor. In terms of processing, autophosphorylated on both serine and threonine residues. Strongly phosphorylated during mitosis but this does not appear to significantly affect its intrinsic kinase activity. Phosphorylation by AURKB is required for full activity toward histone H3 at 'Ser-3' in mitosis. As to expression, strongly expressed in testis. Also present in thymus and bone marrow and low levels observed in prostate, intestine, lung, spleen and lymph node. Expressed in fetal skin, liver, kidney and small intestine and also in proliferating but not non-proliferating cell lines.

The protein resides in the nucleus. Its subcellular location is the chromosome. It is found in the cytoplasm. The protein localises to the cytoskeleton. It localises to the spindle. It carries out the reaction L-seryl-[protein] + ATP = O-phospho-L-seryl-[protein] + ADP + H(+). It catalyses the reaction L-threonyl-[protein] + ATP = O-phospho-L-threonyl-[protein] + ADP + H(+). With respect to regulation, constitutive activity that does not require phosphorylation. Specifically inhibited by 3-(1H-indazol-5-yl)-N-propylimidazo[1,2-b]pyridazin-6-amine (CHR-6494). Its function is as follows. Serine/threonine-protein kinase that phosphorylates histone H3 at 'Thr-3' (H3T3ph) during mitosis. May act through H3T3ph to both position and modulate activation of AURKB and other components of the chromosomal passenger complex (CPC) at centromeres to ensure proper chromatid cohesion, metaphase alignment and normal progression through the cell cycle. The chain is Serine/threonine-protein kinase haspin from Homo sapiens (Human).